The chain runs to 100 residues: NADH-quinone oxidoreductase subunit K (100 aa).

The next 3 helical transmembrane spans lie at 4 to 24 (LNYGFTISIILFFIGIISLLI), 29 to 49 (IFILVSLEVLINSIILGFILI), and 60 to 80 (VLYIFIVTIATVEVSVMLAIF).

The protein belongs to the complex I subunit 4L family. NDH-1 is composed of 13 different subunits. Subunits NuoA, H, J, K, L, M, N constitute the membrane sector of the complex.

It localises to the cell membrane. The enzyme catalyses a quinone + NADH + 5 H(+)(in) = a quinol + NAD(+) + 4 H(+)(out). In terms of biological role, NDH-1 shuttles electrons from NADH, via FMN and iron-sulfur (Fe-S) centers, to quinones in the respiratory chain. The immediate electron acceptor for the enzyme in this species is believed to be ubiquinone. Couples the redox reaction to proton translocation (for every two electrons transferred, four hydrogen ions are translocated across the cytoplasmic membrane), and thus conserves the redox energy in a proton gradient. The polypeptide is NADH-quinone oxidoreductase subunit K (Buchnera aphidicola subsp. Cinara cedri (strain Cc)).